The sequence spans 125 residues: 13 kDa ribonucleoprotein-associated protein (125 aa).

It belongs to the eukaryotic ribosomal protein eL8 family. As to quaternary structure, component of the U3 snoRNP particle. Binds to the C'/D and B/C motifs in U3 snoRNA. Component of the 25S U4/U6.U5 tri-snRNP particle, a subcomplex of the spliceosome. Binds to the 5' stem-loop of U4 snRNA.

The protein resides in the nucleus. It is found in the nucleolus. Functionally, common component of the spliceosome and rRNA processing machinery. In association with the spliceosomal U4/U6.U5 tri-snRNP particle, required for splicing of pre-mRNA. In association with box C/D snoRNPs, required for processing of pre-ribosomal RNA (rRNA) and site-specific 2'-O-methylation of substrate RNAs. Essential for the accumulation and stability of U4 snRNA, U6 snRNA, and box C/D snoRNAs. The chain is 13 kDa ribonucleoprotein-associated protein (snu13) from Schizosaccharomyces pombe (strain 972 / ATCC 24843) (Fission yeast).